The primary structure comprises 621 residues: UvrABC system protein C (621 aa).

The 80-residue stretch at asparagine 13–isoleucine 92 folds into the GIY-YIG domain. A UVR domain is found at arginine 204–isoleucine 239.

The protein belongs to the UvrC family. As to quaternary structure, interacts with UvrB in an incision complex.

Its subcellular location is the cytoplasm. The UvrABC repair system catalyzes the recognition and processing of DNA lesions. UvrC both incises the 5' and 3' sides of the lesion. The N-terminal half is responsible for the 3' incision and the C-terminal half is responsible for the 5' incision. This Clostridium beijerinckii (strain ATCC 51743 / NCIMB 8052) (Clostridium acetobutylicum) protein is UvrABC system protein C.